Here is a 122-residue protein sequence, read N- to C-terminus: Large ribosomal subunit protein uL14 (122 aa).

The protein belongs to the universal ribosomal protein uL14 family. Part of the 50S ribosomal subunit. Forms a cluster with proteins L3 and L19. In the 70S ribosome, L14 and L19 interact and together make contacts with the 16S rRNA in bridges B5 and B8.

Binds to 23S rRNA. Forms part of two intersubunit bridges in the 70S ribosome. This is Large ribosomal subunit protein uL14 from Chlamydia muridarum (strain MoPn / Nigg).